Here is a 424-residue protein sequence, read N- to C-terminus: Serine--tRNA ligase (424 aa).

Residue 231 to 233 (TAE) coordinates L-serine. Residue 262 to 264 (RAE) participates in ATP binding. Glu-285 lines the L-serine pocket. 349–352 (EISS) provides a ligand contact to ATP. Position 385 (Ser-385) interacts with L-serine.

Belongs to the class-II aminoacyl-tRNA synthetase family. Type-1 seryl-tRNA synthetase subfamily. As to quaternary structure, homodimer. The tRNA molecule binds across the dimer.

Its subcellular location is the cytoplasm. The enzyme catalyses tRNA(Ser) + L-serine + ATP = L-seryl-tRNA(Ser) + AMP + diphosphate + H(+). It catalyses the reaction tRNA(Sec) + L-serine + ATP = L-seryl-tRNA(Sec) + AMP + diphosphate + H(+). Its pathway is aminoacyl-tRNA biosynthesis; selenocysteinyl-tRNA(Sec) biosynthesis; L-seryl-tRNA(Sec) from L-serine and tRNA(Sec): step 1/1. In terms of biological role, catalyzes the attachment of serine to tRNA(Ser). Is also able to aminoacylate tRNA(Sec) with serine, to form the misacylated tRNA L-seryl-tRNA(Sec), which will be further converted into selenocysteinyl-tRNA(Sec). This chain is Serine--tRNA ligase, found in Geobacillus thermodenitrificans (strain NG80-2).